The primary structure comprises 349 residues: Fructose-1,6-bisphosphatase class 1 (349 aa).

Mg(2+) is bound by residues glutamate 91, aspartate 110, leucine 112, and aspartate 113. Residues 113 to 116 (DGSS) and asparagine 205 contribute to the substrate site. A Mg(2+)-binding site is contributed by glutamate 277.

Belongs to the FBPase class 1 family. Homotetramer. Mg(2+) is required as a cofactor.

It is found in the cytoplasm. The catalysed reaction is beta-D-fructose 1,6-bisphosphate + H2O = beta-D-fructose 6-phosphate + phosphate. It participates in carbohydrate biosynthesis; gluconeogenesis. This is Fructose-1,6-bisphosphatase class 1 from Rhizobium meliloti (strain 1021) (Ensifer meliloti).